Here is a 23-residue protein sequence, read N- to C-terminus: Pseudin-3 (23 aa).

Expressed by the skin glands.

It is found in the secreted. In terms of biological role, possesses antifungal activity against C.albicans and is also active against E.coli and S.aureus. This chain is Pseudin-3, found in Pseudis paradoxa (Paradoxical frog).